The sequence spans 429 residues: Serine hydroxymethyltransferase (429 aa).

(6S)-5,6,7,8-tetrahydrofolate is bound by residues Leu-126 and 130 to 132 (GHL). N6-(pyridoxal phosphate)lysine is present on Lys-235. 359–361 (SPF) contributes to the (6S)-5,6,7,8-tetrahydrofolate binding site.

The protein belongs to the SHMT family. As to quaternary structure, homodimer. Requires pyridoxal 5'-phosphate as cofactor.

The protein localises to the cytoplasm. It carries out the reaction (6R)-5,10-methylene-5,6,7,8-tetrahydrofolate + glycine + H2O = (6S)-5,6,7,8-tetrahydrofolate + L-serine. It functions in the pathway one-carbon metabolism; tetrahydrofolate interconversion. It participates in amino-acid biosynthesis; glycine biosynthesis; glycine from L-serine: step 1/1. Catalyzes the reversible interconversion of serine and glycine with tetrahydrofolate (THF) serving as the one-carbon carrier. This reaction serves as the major source of one-carbon groups required for the biosynthesis of purines, thymidylate, methionine, and other important biomolecules. Also exhibits THF-independent aldolase activity toward beta-hydroxyamino acids, producing glycine and aldehydes, via a retro-aldol mechanism. This Synechococcus sp. (strain WH7803) protein is Serine hydroxymethyltransferase.